The primary structure comprises 246 residues: Peptide methionine sulfoxide reductase (246 aa).

Cys-48 acts as the Cysteine sulfenic acid (-SOH) intermediate in catalysis. A disulfide bridge links Cys-48 with Cys-246.

Post-translationally, conjugated to URM1, a ubiquitin-like protein.

The catalysed reaction is L-methionyl-[protein] + [thioredoxin]-disulfide + H2O = L-methionyl-(S)-S-oxide-[protein] + [thioredoxin]-dithiol. It carries out the reaction [thioredoxin]-disulfide + L-methionine + H2O = L-methionine (S)-S-oxide + [thioredoxin]-dithiol. Has an important function as a repair enzyme for proteins that have been inactivated by oxidation. Catalyzes the reduction of methionine sulfoxide in proteins to methionine. Does not catalyze the reverse reaction involving the oxidation of methionine residues. The polypeptide is Peptide methionine sulfoxide reductase (Drosophila melanogaster (Fruit fly)).